The chain runs to 186 residues: Nicotinamide-nucleotide adenylyltransferase (186 aa).

This sequence belongs to the archaeal NMN adenylyltransferase family.

It localises to the cytoplasm. It carries out the reaction beta-nicotinamide D-ribonucleotide + ATP + H(+) = diphosphate + NAD(+). It functions in the pathway cofactor biosynthesis; NAD(+) biosynthesis; NAD(+) from nicotinamide D-ribonucleotide: step 1/1. This chain is Nicotinamide-nucleotide adenylyltransferase, found in Thermococcus sibiricus (strain DSM 12597 / MM 739).